The sequence spans 609 residues: Glutamine--fructose-6-phosphate aminotransferase [isomerizing] (609 aa).

The active-site Nucleophile; for GATase activity is the cysteine 2. One can recognise a Glutamine amidotransferase type-2 domain in the interval 2-219; that stretch reads CGIVGYIGGR…DGECARLTRD (218 aa). SIS domains lie at 285–424 and 458–599; these read SSDL…LRGT and LARE…VDQP. The active-site For Fru-6P isomerization activity is the lysine 604.

Homodimer.

It localises to the cytoplasm. The catalysed reaction is D-fructose 6-phosphate + L-glutamine = D-glucosamine 6-phosphate + L-glutamate. In terms of biological role, catalyzes the first step in hexosamine metabolism, converting fructose-6P into glucosamine-6P using glutamine as a nitrogen source. The protein is Glutamine--fructose-6-phosphate aminotransferase [isomerizing] of Gloeobacter violaceus (strain ATCC 29082 / PCC 7421).